The chain runs to 141 residues: Nucleoside diphosphate kinase (141 aa).

ATP-binding residues include Lys-11, Phe-59, Arg-87, Thr-93, Arg-104, and Asn-114. His-117 (pros-phosphohistidine intermediate) is an active-site residue.

The protein belongs to the NDK family. In terms of assembly, homotetramer. Requires Mg(2+) as cofactor.

It localises to the cytoplasm. The enzyme catalyses a 2'-deoxyribonucleoside 5'-diphosphate + ATP = a 2'-deoxyribonucleoside 5'-triphosphate + ADP. The catalysed reaction is a ribonucleoside 5'-diphosphate + ATP = a ribonucleoside 5'-triphosphate + ADP. Major role in the synthesis of nucleoside triphosphates other than ATP. The ATP gamma phosphate is transferred to the NDP beta phosphate via a ping-pong mechanism, using a phosphorylated active-site intermediate. The polypeptide is Nucleoside diphosphate kinase (Burkholderia multivorans (strain ATCC 17616 / 249)).